The following is a 209-amino-acid chain: COP9 signalosome complex subunit 8 (209 aa).

The region spanning 8-179 (DNAFSFRKLL…GTLDVSLNRF (172 aa)) is the PCI domain. Serine 175 bears the Phosphoserine mark.

It belongs to the CSN8 family. Component of the CSN complex, composed of COPS1/GPS1, COPS2, COPS3, COPS4, COPS5, COPS6, COPS7 (COPS7A or COPS7B), COPS8 and COPS9. In the complex, it probably interacts directly with COPS3, COPS4 and COPS7 (COPS7A or COPS7B). As to expression, widely expressed.

It is found in the cytoplasm. The protein resides in the nucleus. Functionally, component of the COP9 signalosome complex (CSN), a complex involved in various cellular and developmental processes. The CSN complex is an essential regulator of the ubiquitin (Ubl) conjugation pathway by mediating the deneddylation of the cullin subunits of SCF-type E3 ligase complexes, leading to decrease the Ubl ligase activity of SCF-type complexes such as SCF, CSA or DDB2. The complex is also involved in phosphorylation of p53/TP53, c-jun/JUN, IkappaBalpha/NFKBIA, ITPK1 and IRF8/ICSBP, possibly via its association with CK2 and PKD kinases. CSN-dependent phosphorylation of TP53 and JUN promotes and protects degradation by the Ubl system, respectively. This chain is COP9 signalosome complex subunit 8 (Cops8), found in Mus musculus (Mouse).